Consider the following 491-residue polypeptide: Ligand-gated ion channel 50 (491 aa).

The first 19 residues, 1-19, serve as a signal peptide directing secretion; it reads MRFLLVLQLVFFYFSAATT. Residues Asn55 and Asn101 are each glycosylated (N-linked (GlcNAc...) asparagine). Cys157 and Cys171 are disulfide-bonded. The next 3 membrane-spanning stretches (helical) occupy residues 241–261, 265–287, and 302–322; these read LFQS…GFFF, SVSA…FGNV, and VWMI…AIVC. The N-linked (GlcNAc...) asparagine glycan is linked to Asn418. Residues 465–485 traverse the membrane as a helical segment; that stretch reads MIMFPLSFLIFNVVYWSIYFM.

It belongs to the ligand-gated ion channel (TC 1.A.9) family.

The protein resides in the postsynaptic cell membrane. Its subcellular location is the cell membrane. The chain is Ligand-gated ion channel 50 (lgc-50) from Caenorhabditis elegans.